A 593-amino-acid chain; its full sequence is Aspartate--tRNA(Asp/Asn) ligase (593 aa).

Glu173 serves as a coordination point for L-aspartate. The aspartate stretch occupies residues 197–200; that stretch reads QLFK. Arg219 lines the L-aspartate pocket. ATP-binding positions include 219–221 and Gln228; that span reads RDE. An L-aspartate-binding site is contributed by His451. Position 485 (Glu485) interacts with ATP. Arg492 is an L-aspartate binding site. Position 537–540 (537–540) interacts with ATP; that stretch reads GIDR.

It belongs to the class-II aminoacyl-tRNA synthetase family. Type 1 subfamily. Homodimer.

It localises to the cytoplasm. It catalyses the reaction tRNA(Asx) + L-aspartate + ATP = L-aspartyl-tRNA(Asx) + AMP + diphosphate. Aspartyl-tRNA synthetase with relaxed tRNA specificity since it is able to aspartylate not only its cognate tRNA(Asp) but also tRNA(Asn). Reaction proceeds in two steps: L-aspartate is first activated by ATP to form Asp-AMP and then transferred to the acceptor end of tRNA(Asp/Asn). In Legionella pneumophila (strain Paris), this protein is Aspartate--tRNA(Asp/Asn) ligase.